A 418-amino-acid polypeptide reads, in one-letter code: Phosphopentomutase (418 aa).

Positions 10, 297, 302, 338, 339, and 350 each coordinate Mn(2+).

This sequence belongs to the phosphopentomutase family. It depends on Mn(2+) as a cofactor.

The protein resides in the cytoplasm. The catalysed reaction is 2-deoxy-alpha-D-ribose 1-phosphate = 2-deoxy-D-ribose 5-phosphate. It catalyses the reaction alpha-D-ribose 1-phosphate = D-ribose 5-phosphate. It participates in carbohydrate degradation; 2-deoxy-D-ribose 1-phosphate degradation; D-glyceraldehyde 3-phosphate and acetaldehyde from 2-deoxy-alpha-D-ribose 1-phosphate: step 1/2. Isomerase that catalyzes the conversion of deoxy-ribose 1-phosphate (dRib-1-P) and ribose 1-phosphate (Rib-1-P) to deoxy-ribose 5-phosphate (dRib-5-P) and ribose 5-phosphate (Rib-5-P), respectively. The polypeptide is Phosphopentomutase (Chromohalobacter salexigens (strain ATCC BAA-138 / DSM 3043 / CIP 106854 / NCIMB 13768 / 1H11)).